We begin with the raw amino-acid sequence, 447 residues long: Asparagine--tRNA ligase (447 aa).

The protein belongs to the class-II aminoacyl-tRNA synthetase family. In terms of assembly, homodimer.

It is found in the cytoplasm. It catalyses the reaction tRNA(Asn) + L-asparagine + ATP = L-asparaginyl-tRNA(Asn) + AMP + diphosphate + H(+). The protein is Asparagine--tRNA ligase of Lactococcus lactis subsp. cremoris (strain MG1363).